The sequence spans 63 residues: UPF0391 membrane protein lpg2415 (63 aa).

The next 2 helical transmembrane spans lie at 4-24 (WALI…RGVA) and 33-53 (VLFF…LLGG).

The protein belongs to the UPF0391 family.

The protein resides in the cell membrane. This is UPF0391 membrane protein lpg2415 from Legionella pneumophila subsp. pneumophila (strain Philadelphia 1 / ATCC 33152 / DSM 7513).